The chain runs to 378 residues: AT-hook motif nuclear-localized protein 5 (378 aa).

Disordered regions lie at residues Gln30–Arg70, Val88–Gln160, and Asn302–Gly378. Residues Val104–Lys113 are compositionally biased toward basic residues. The Bipartite nuclear localization signal signature appears at Lys105–Lys113. 2 consecutive DNA-binding regions (a.T hook) follow at residues Lys105–Asp117 and Lys147–Lys159. The region spanning Thr171–Lys314 is the PPC domain. Composition is skewed to polar residues over residues Glu316 to Gly327 and Ser335 to Pro345.

In terms of assembly, interacts with AHL29.

It is found in the nucleus. Transcription factor that specifically binds AT-rich DNA sequences related to the nuclear matrix attachment regions (MARs). The chain is AT-hook motif nuclear-localized protein 5 from Arabidopsis thaliana (Mouse-ear cress).